We begin with the raw amino-acid sequence, 231 residues long: Large ribosomal subunit protein uL1 (231 aa).

This sequence belongs to the universal ribosomal protein uL1 family. In terms of assembly, part of the 50S ribosomal subunit.

In terms of biological role, binds directly to 23S rRNA. The L1 stalk is quite mobile in the ribosome, and is involved in E site tRNA release. Protein L1 is also a translational repressor protein, it controls the translation of the L11 operon by binding to its mRNA. The chain is Large ribosomal subunit protein uL1 from Chromobacterium violaceum (strain ATCC 12472 / DSM 30191 / JCM 1249 / CCUG 213 / NBRC 12614 / NCIMB 9131 / NCTC 9757 / MK).